A 618-amino-acid chain; its full sequence is Sodium/iodide cotransporter (618 aa).

Topologically, residues 1-14 (MEGAEAGARATFGP) are extracellular. A helical transmembrane segment spans residues 15–31 (WDYGVFATMLLVSTGIG). The Cytoplasmic portion of the chain corresponds to 32–56 (LWVGLARGGQRSADDFFTGGRQLAA). A discontinuously helical membrane pass occupies residues 57-80 (VPVGLSLAASFMSAVQVLGVPAEA). S69, V71, and Q72 together coordinate Na(+). Iodide is bound at residue V76. Residues 81 to 84 (ARYG) lie on the Extracellular side of the membrane. Residues 85 to 105 (LKFLWMCVGQLLNSLLTALLF) traverse the membrane as a helical segment. M90 is an iodide binding site. Over 106–130 (LPIFYRLGLTSTYQYLELRFSRAVR) the chain is Cytoplasmic. A helical transmembrane segment spans residues 131 to 157 (LCGTLQYLVATMLYTGIVIYAPALILN). Y144 lines the Na(+) pocket. Topologically, residues 158–163 (QVTGLD) are extracellular. A helical transmembrane segment spans residues 164–181 (IWASLLSTGIICTLYTTV). The Cytoplasmic portion of the chain corresponds to 182–189 (GGMKAVVW). The helical transmembrane segment at 190-208 (TDVFQVVVMLVGFWVILAR) threads the bilayer. The Extracellular portion of the chain corresponds to 209–243 (GVMLMGGPWNVLSLAQNHSRINLMDFDPDPRSRYT). A discontinuously helical membrane pass occupies residues 244–266 (FWTFVVGGSLVWLSMYGVNQAQV). W255 is a binding site for iodide. M258 is a Na(+) binding site. The Cytoplasmic segment spans residues 267–278 (QRYVACHTERKA). Residues 279–301 (KLALLVNQLGLFLIVASAACCGI) traverse the membrane as a helical segment. At 302–335 (VMFVYYKDCDPLLTGRIAAPDQYMPLLVLDIFED) the chain is on the extracellular side. A helical membrane pass occupies residues 336–363 (LPGVPGLFLACAYSGTLSTASTSINAMA). Over 364 to 386 (AVTVEDLIKPRMPSLAPRKLVFI) the chain is Cytoplasmic. The chain crosses the membrane as a helical span at residues 387–408 (SKGLSFIYGSTCLTVAALSSLL). Residues 409 to 411 (GGG) are Extracellular-facing. A helical membrane pass occupies residues 412–437 (VLQGSFTVMGVISGPLLGAFTLGMLL). An iodide-binding site is contributed by L413. Na(+) contacts are provided by S416 and F417. F417 serves as a coordination point for iodide. At 438–441 (PACN) the chain is on the cytoplasmic side. Residues 442-465 (TPGVLSGLTAGLAVSLWVAVGATL) traverse the membrane as a helical segment. At 466–520 (YPPGEQTMGVLPTSAAGCTNASVLPSPPGAANTSRGIPSSGMDSGRPAFADTFYA) the chain is on the extracellular side. N-linked (GlcNAc...) asparagine glycans are attached at residues N485 and N497. A helical membrane pass occupies residues 521–545 (VSYLYYGALGTLTTMLCGALISYLT). Over 546–618 (GPTKRSSLGP…YLGHDVETNL (73 aa)) the chain is Cytoplasmic. Phosphoserine; by PKA is present on S551. Over residues 571–587 (PKEDTTTLEDSLVKGPE) the composition is skewed to basic and acidic residues. Positions 571-618 (PKEDTTTLEDSLVKGPEDIPAATKKPPGFRPEAETHPLYLGHDVETNL) are disordered.

Belongs to the sodium:solute symporter (SSF) (TC 2.A.21) family. In terms of assembly, monomer. Post-translationally, glycosylated.

The protein resides in the cell membrane. It is found in the cytoplasm. The enzyme catalyses iodide(out) + 2 Na(+)(out) = iodide(in) + 2 Na(+)(in). The catalysed reaction is chlorate(out) + 2 Na(+)(out) = chlorate(in) + 2 Na(+)(in). It catalyses the reaction thiocyanate(out) + 2 Na(+)(out) = thiocyanate(in) + 2 Na(+)(in). It carries out the reaction nitrate(out) + 2 Na(+)(out) = nitrate(in) + 2 Na(+)(in). The enzyme catalyses selenocyanate(out) + 2 Na(+)(out) = selenocyanate(in) + 2 Na(+)(in). With respect to regulation, perchlorate inhibits iodide transport activity. Oxyanions inhibit iodide transport activity by blocking the binding sites for iodide and one of the sodium ions. In terms of biological role, sodium:iodide symporter that mediates the transport of iodide into the thyroid gland. Can also mediate the transport of chlorate, thiocynate, nitrate and selenocynate. This Mus musculus (Mouse) protein is Sodium/iodide cotransporter (Slc5a5).